The chain runs to 155 residues: uncharacterized protein (155 aa).

Residues Ile-4–Phe-65 form the HTH asnC-type domain. Positions Leu-23 to Glu-42 form a DNA-binding region, H-T-H motif.

This is an uncharacterized protein from Pyrococcus abyssi (strain GE5 / Orsay).